Here is a 139-residue protein sequence, read N- to C-terminus: Ribonuclease P protein component (139 aa).

Belongs to the RnpA family. Consists of a catalytic RNA component (M1 or rnpB) and a protein subunit.

It catalyses the reaction Endonucleolytic cleavage of RNA, removing 5'-extranucleotides from tRNA precursor.. Its function is as follows. RNaseP catalyzes the removal of the 5'-leader sequence from pre-tRNA to produce the mature 5'-terminus. It can also cleave other RNA substrates such as 4.5S RNA. The protein component plays an auxiliary but essential role in vivo by binding to the 5'-leader sequence and broadening the substrate specificity of the ribozyme. The chain is Ribonuclease P protein component from Chlamydia felis (strain Fe/C-56) (Chlamydophila felis).